A 543-amino-acid chain; its full sequence is Chaperonin GroEL (543 aa).

ATP-binding positions include 30–33, Lys51, 87–91, Gly415, 480–482, and Asp496; these read TLGP, DGTTT, and DAA.

Belongs to the chaperonin (HSP60) family. In terms of assembly, forms a cylinder of 14 subunits composed of two heptameric rings stacked back-to-back. Interacts with the co-chaperonin GroES.

The protein resides in the cytoplasm. It carries out the reaction ATP + H2O + a folded polypeptide = ADP + phosphate + an unfolded polypeptide.. Functionally, together with its co-chaperonin GroES, plays an essential role in assisting protein folding. The GroEL-GroES system forms a nano-cage that allows encapsulation of the non-native substrate proteins and provides a physical environment optimized to promote and accelerate protein folding. The sequence is that of Chaperonin GroEL from Hydrogenobaculum sp. (strain Y04AAS1).